The primary structure comprises 948 residues: P cell-type agglutination protein map4 (948 aa).

Residues 1 to 23 form the signal peptide; it reads MNSYAILLSLFFSFERLLTLANA. 3 N-linked (GlcNAc...) asparagine glycosylation sites follow: asparagine 31, asparagine 32, and asparagine 57. 2 disordered regions span residues 136–174 and 253–333; these read IPRG…IGTG and FYET…PTTY. Over residues 149–174 the composition is skewed to low complexity; the sequence is PTYSASDSSATTITSSSPSTSIIGTG. The span at 253-264 shows a compositional bias: polar residues; that stretch reads FYETKSSTSSVP. The span at 265-332 shows a compositional bias: low complexity; that stretch reads TQTIDSSSFT…PSLSSALPTT (68 aa). A glycan (N-linked (GlcNAc...) asparagine) is linked at asparagine 383. A disordered region spans residues 408-432; sequence LTSSTKKIPSTTLPTSSKMITTTTP. Residues asparagine 436, asparagine 469, asparagine 491, asparagine 522, asparagine 553, asparagine 568, and asparagine 598 are each glycosylated (N-linked (GlcNAc...) asparagine). Repeat copies occupy residues 617 to 652, 653 to 688, 689 to 724, 725 to 760, and 761 to 796. Residues 617 to 796 form a 5 X 36 AA approximate tandem repeats region; sequence SYVTETTTSG…GTVLIDVPTP (180 aa). Residues 796–948 form the DIPSY domain; that stretch reads PTASSSPFPS…ANVVLRALEY (153 aa). Residue asparagine 921 is glycosylated (N-linked (GlcNAc...) asparagine).

The protein belongs to the mam3/map4 family.

It localises to the cell surface. P cell-type specific protein which involved in agglutination during conjugation. This is P cell-type agglutination protein map4 from Schizosaccharomyces pombe (strain 972 / ATCC 24843) (Fission yeast).